Here is a 375-residue protein sequence, read N- to C-terminus: Aminomethyltransferase (375 aa).

It belongs to the GcvT family. The glycine cleavage system is composed of four proteins: P, T, L and H.

It catalyses the reaction N(6)-[(R)-S(8)-aminomethyldihydrolipoyl]-L-lysyl-[protein] + (6S)-5,6,7,8-tetrahydrofolate = N(6)-[(R)-dihydrolipoyl]-L-lysyl-[protein] + (6R)-5,10-methylene-5,6,7,8-tetrahydrofolate + NH4(+). In terms of biological role, the glycine cleavage system catalyzes the degradation of glycine. The protein is Aminomethyltransferase of Symbiobacterium thermophilum (strain DSM 24528 / JCM 14929 / IAM 14863 / T).